The sequence spans 448 residues: MRFDPREIGEVLEMLLFRELDIRAVTLSVNTLPAIRPNLKDTLDALSHLLEPYARRLRPAAEKVASKLGVRIVTVRLAVSPTSIMLEPLGDAKAAVEIAAFLDKLAGRHGVDMVGGFSAFVHGGVSRGAAALIESLAEALNSTERVAGFLNAASTMTGINLEAVRRAARIVLSLKPHAAARFAVTSNLPEDVPFMPGAYHGLGQPDAVVNIAVSGPGVIEAVVRSLPDADVRTLHDAIKRAAFKITRLGELVGREVAKELGVAFGAVDLSVAPSPKVGDSVAAVLEAMGLPRVGAPGSVFALALFTDAVKKGGAMAASTIGGLSGAFIPVSEDAVMAQAAAEGAITLDGLKAMAAVCNTGLDMVGIPADVGPDVVAAIIADVMALAVHLDKPLGVRLIPVPGARPGDFYDLGGLYGRVAVVDASRYSRIPLVARPGTAPPGVERLKKG.

It belongs to the UPF0210 family.

In Pyrobaculum arsenaticum (strain DSM 13514 / JCM 11321 / PZ6), this protein is UPF0210 protein Pars_1033.